A 555-amino-acid polypeptide reads, in one-letter code: Dimethylaniline monooxygenase [N-oxide-forming] 4 (555 aa).

Residues 9–13, E32, and 40–41 each bind FAD; these read GAGVS and LW. NADP(+) contacts are provided by residues 60–61 and 195–198; these read TN and SGGD. Residues 515-532 form a helical membrane-spanning segment; sequence YLKVWGAPLLLASVLLIC.

It belongs to the FMO family. Requires FAD as cofactor. Kidney and liver.

It is found in the microsome membrane. The protein localises to the endoplasmic reticulum membrane. It catalyses the reaction N,N-dimethylaniline + NADPH + O2 + H(+) = N,N-dimethylaniline N-oxide + NADP(+) + H2O. In terms of biological role, this protein is involved in the oxidative metabolism of a variety of xenobiotics such as drugs and pesticides. This is Dimethylaniline monooxygenase [N-oxide-forming] 4 (FMO4) from Oryctolagus cuniculus (Rabbit).